Consider the following 635-residue polypeptide: Allantoin permease (635 aa).

Residues 1–144 (MANDALSAIF…AGTGLQLGLN (144 aa)) lie on the Cytoplasmic side of the membrane. Residues 145–165 (WWQCWLTVWIGYTFAGIFVVL) traverse the membrane as a helical segment. The Extracellular segment spans residues 166 to 174 (NSRFGSAYH). The chain crosses the membrane as a helical span at residues 175–195 (LSFPITVRASFGIFFSMWPII). Residues 196-198 (NRV) are Cytoplasmic-facing. The helical transmembrane segment at 199–219 (VMAIVWYAVQAWLGATPVALM) threads the bilayer. At 220–243 (LKSIFGKNLEDRIPNHFGSPNSTT) the chain is on the extracellular side. A helical membrane pass occupies residues 244–264 (FEFMCFFIFWVVSIPFVLVAP). The Cytoplasmic segment spans residues 265-269 (HKIRH). The chain crosses the membrane as a helical span at residues 270 to 290 (LFTVKAALIPFAAFGFLIWAL). Residues 291-311 (KKSHGKIELGTLNDYSPHGSE) lie on the Extracellular side of the membrane. Residues 312–332 (FSWIFVRSLMACVANFAALII) traverse the membrane as a helical segment. Residues 333-351 (NAPDFGRFAKNPQASLWPQ) are Cytoplasmic-facing. Residues 352–372 (LVAIPLFFAITCLIGIIVTAA) traverse the membrane as a helical segment. The Extracellular segment spans residues 373 to 401 (GYHLYGVNYWSPLDVLGQFLETTYTRGTR). A helical transmembrane segment spans residues 402-422 (AGVFLISFVFALAQLGTNISA). At 423–443 (NSLACGADMTALFPRYINIRR) the chain is on the cytoplasmic side. Residues 444-464 (GSLFCVAMALCICPWNLMASS) form a helical membrane-spanning segment. Over 465-466 (SK) the chain is Extracellular. Residues 467–487 (FTSALGAYAIFLSSIAGVICA) traverse the membrane as a helical segment. Residues 488-522 (DYFVVRRGYVKLTHLFLAQKGSFYMFGNKFGANWR) are Cytoplasmic-facing. The helical transmembrane segment at 523 to 543 (AFVAYICGIAPNLPGFIGDVG) threads the bilayer. Residues 544 to 560 (APKITVSEGAMRLYYLG) lie on the Extracellular side of the membrane. Residues 561 to 581 (YPVGFFISAVIYLILCYFFPV) traverse the membrane as a helical segment. Topologically, residues 582 to 635 (PGTPVTNFLTEKGWFQRWAYVEDFEQDWKNELRRDDLCDDTVSIYDGTEEKIVY) are cytoplasmic.

The protein belongs to the purine-cytosine permease (2.A.39) family.

It localises to the membrane. Transport of allantoin. This is Allantoin permease (DAL4) from Saccharomyces cerevisiae (strain ATCC 204508 / S288c) (Baker's yeast).